Here is a 567-residue protein sequence, read N- to C-terminus: Urease subunit alpha (567 aa).

The Urease domain occupies 129–567; it reads GGIDAHIHFI…LPMAQRYFLF (439 aa). Residues His134, His136, and Lys217 each coordinate Ni(2+). Lys217 is modified (N6-carboxylysine). His219 provides a ligand contact to substrate. Positions 246 and 272 each coordinate Ni(2+). The active-site Proton donor is His320. Position 360 (Asp360) interacts with Ni(2+).

Belongs to the metallo-dependent hydrolases superfamily. Urease alpha subunit family. Heterotrimer of UreA (gamma), UreB (beta) and UreC (alpha) subunits. Three heterotrimers associate to form the active enzyme. Requires Ni cation as cofactor. In terms of processing, carboxylation allows a single lysine to coordinate two nickel ions.

It is found in the cytoplasm. The catalysed reaction is urea + 2 H2O + H(+) = hydrogencarbonate + 2 NH4(+). The protein operates within nitrogen metabolism; urea degradation; CO(2) and NH(3) from urea (urease route): step 1/1. This chain is Urease subunit alpha, found in Teredinibacter turnerae (strain ATCC 39867 / T7901).